We begin with the raw amino-acid sequence, 2515 residues long: Nonribosomal peptide synthetase tpzA (2515 aa).

An adenylation 1 region spans residues 246–648 (ELATRQPGAQ…GRMGTQVKLR (403 aa)). Residues 794-867 (SEVEHLIHAI…DMATVALKTS (74 aa)) enclose the Carrier 1 domain. Position 828 is an O-(pantetheine 4'-phosphoryl)serine (Ser828). Residues 924 to 1332 (DAYPCSPLQE…IRSVPHITPE (409 aa)) form a condensation 1 region. The segment at 1357-1758 (RKQSQETPSA…GRMNDQIKLR (402 aa)) is adenylation 2. Residues 1900–1976 (LATTNEERTL…AILSHLTGRK (77 aa)) enclose the Carrier 2 domain. Ser1937 bears the O-(pantetheine 4'-phosphoryl)serine mark. The tract at residues 2013–2431 (VEDIYPCGPI…LGILPPEEQK (419 aa)) is condensation 2. A Carrier 3 domain is found at 2436 to 2512 (PSLSAAVVRL…AMARRSLVVS (77 aa)). Ser2473 is modified (O-(pantetheine 4'-phosphoryl)serine).

Belongs to the NRP synthetase family.

Its pathway is secondary metabolite biosynthesis. In terms of biological role, nonribosomal peptide synthetase; part of the gene cluster that mediates the biosynthesis of terreazepine,. The first step of terreazepine biosynthesis is catalyzed by the indoleamine 2,3-dioxygenase tpzB which produces N-formyl-kynurenine through the catabolism of tryptophan. The two-module NRPS tpzA then utilizes anthranilate and kynurenine to assemble terreazepine. The first adenylation domain of tpzA (A1) loads anthranilate onto the T1 domain, while A2 loads kynurenine, generated through spontaneous nonenzymatic deformylation of the tzpB-supplied N-formyl-kynurenine. TpzA produces a 2:1 mixture of S-R enantiomers, which suggests that the A2 domain accepts both D- and L-kynurenine. The peptide bond formation between the tethered amino acids is catalyzed by the first condensation domain (C1) between anthranilate's carbonyl carbon and kynurenine's aliphatic primary amine. The second C domain (C2) catalyzes the final cyclization event between the aromatic amine of kynurenine and the tethered carbonyl carbon, yielding the final terreazepine product. The T3 domain may facilitate the interaction with downstream tailoring enzymes. The polypeptide is Nonribosomal peptide synthetase tpzA (Aspergillus terreus (strain NIH 2624 / FGSC A1156)).